A 308-amino-acid chain; its full sequence is MEFNQHTTVLLNETIELLHVKPDGIYVDCTFGRGGHSQLILKKLSKKGKLICIDQDQQAIDFANNLFKDNPNVIVIKTNFKNLKSVLYDHQIFHVDGFVFDLGLSSPQLDDPERGFSYHKDALLDMRMDQEQKLNAHYIVNHYSFAKLVNIFTKYGEIKYAKTIANGIVKERSTKAINTTLELVEIIKNYSPKKILFEKKHPARLFFQAIRIEVNDELNILKKAFNDAISMLNPLGVVAIISFHSLEDKIVKKVFNNYAKNKLPKEIPLNNYVNQYSLLNQKIMPSTQELNDNNRSRSSILRGLVKNY.

S-adenosyl-L-methionine is bound by residues G34–H36, D54, F80, D101, and Q108.

The protein belongs to the methyltransferase superfamily. RsmH family.

Its subcellular location is the cytoplasm. It catalyses the reaction cytidine(1402) in 16S rRNA + S-adenosyl-L-methionine = N(4)-methylcytidine(1402) in 16S rRNA + S-adenosyl-L-homocysteine + H(+). Functionally, specifically methylates the N4 position of cytidine in position 1402 (C1402) of 16S rRNA. This is Ribosomal RNA small subunit methyltransferase H from Ureaplasma urealyticum serovar 10 (strain ATCC 33699 / Western).